A 172-amino-acid chain; its full sequence is Cytidylate kinase (172 aa).

4–12 (GPPGSGKST) lines the ATP pocket.

It belongs to the cytidylate kinase family. Type 2 subfamily.

It localises to the cytoplasm. It carries out the reaction CMP + ATP = CDP + ADP. The enzyme catalyses dCMP + ATP = dCDP + ADP. The polypeptide is Cytidylate kinase (cmk) (Aeropyrum pernix (strain ATCC 700893 / DSM 11879 / JCM 9820 / NBRC 100138 / K1)).